The following is a 1151-amino-acid chain: Sterol regulatory element-binding protein 1 (1151 aa).

A transcriptional activation (acidic) region spans residues 1–59 (MDEPPFTEAALEQALAEPCELDAALLTDIEDMLQLINNQDSDFPGLFDAPYAGVAGGTD). Topologically, residues 1-487 (MDEPPFTEAA…HGRGMLDRSR (487 aa)) are cytoplasmic. A 9aaTAD motif is present at residues 27 to 35 (TDIEDMLQL). 2 disordered regions span residues 39-125 (QDSD…IKEE) and 164-184 (GYPS…TSQT). The span at 57-69 (GTDPTSPDASSPG) shows a compositional bias: low complexity. The segment covering 91–105 (TPPPPPVSPTQPAPT) has biased composition (pro residues). A phosphoserine mark is found at serine 98 and serine 117. Polar residues predominate over residues 170–184 (GSFSSATPPGSTSQT). The interaction with LMNA stretch occupies residues 234–497 (QQVPVLLQPH…LALCVLVFLC (264 aa)). One can recognise a bHLH domain in the interval 324–374 (EKRTAHNAIEKRYRSSINDKIIELKDLVVGTEAKLNKSAVLRKAIDYIRFL). A phosphoserine; by SIK1 mark is found at serine 338 and serine 339. The tract at residues 374 to 396 (LQQSNQKLKQENLSLRTAAHKSK) is leucine-zipper. Phosphoserine; by AMPK is present on serine 397. The interval 399–479 (KDLVSCSSGG…KPEQLPAPHG (81 aa)) is disordered. The residue at position 403 (serine 403) is a Phosphoserine; by SIK1. Residues 431–448 (DAGSPSQSSPLSLGSRGS) are compositionally biased toward low complexity. Serine 457 is subject to Phosphoserine. Residues 488-508 (LALCVLVFLCLSCNPLASLMG) traverse the membrane as a helical segment. The Lumenal portion of the chain corresponds to 509–547 (SWALPGPSDATSAYHGPWRSVLGAEGRDGPGWVLWLLPP). Residues 548–568 (LVWLTNGLLVLLFLALLFVYG) form a helical membrane-spanning segment. Over 569-1151 (EPVTRPHSDP…LGGGTTVTSS (583 aa)) the chain is Cytoplasmic. Positions 987 to 1006 (RQKPPPPSQASQGSSSGAQA) are disordered. The span at 995-1006 (QASQGSSSGAQA) shows a compositional bias: low complexity. Residue serine 1060 is modified to Phosphoserine.

This sequence belongs to the SREBP family. Efficient DNA binding of the soluble transcription factor fragment requires dimerization with another bHLH protein. Interacts with CEBPA, the interaction produces a transcriptional synergy. Interacts with LMNA. In terms of assembly, forms a tight complex with SCAP, the SCAP-SREBP complex, in the endoplasmic reticulum membrane and the Golgi apparatus. Interacts with PAQR3; the interaction anchors the SCAP-SREBP complex to the Golgi apparatus in low cholesterol conditions. Processed in the Golgi apparatus, releasing the protein from the membrane. At low cholesterol the SCAP-SREBP complex is recruited into COPII vesicles for export from the endoplasmic reticulum. In the Golgi, complex SREBPs are cleaved sequentially by site-1 (MBTPS1, S1P) and site-2 (MBTPS2, S2P) proteases. The first cleavage by site-1 protease occurs within the luminal loop, the second cleavage by site-2 protease occurs within the first transmembrane domain, releasing the transcription factor from the Golgi membrane. Post-translationally, phosphorylated by AMPK, leading to suppress protein processing and nuclear translocation, and repress target gene expression. Phosphorylation at Ser-403 by SIK1 represses activity possibly by inhibiting DNA-binding. In terms of processing, SCAP-free SREBF1 is ubiquitinated by the BCR(ARMC5) complex, leading to its degradation. Ubiquitinated; the nuclear form has a rapid turnover and is rapidly ubiquitinated and degraded by the proteasome in the nucleus.

The protein localises to the endoplasmic reticulum membrane. Its subcellular location is the golgi apparatus membrane. The protein resides in the cytoplasmic vesicle. It localises to the COPII-coated vesicle membrane. It is found in the nucleus. With respect to regulation, activation by cleavage is down-regulated upon activation of SIRT3-dependent PRKAA1/AMPK-alpha signaling cascade which leads to inhibition of ATP-consuming lipogenesis to restore cellular energy balance. Functionally, precursor of the transcription factor form (Processed sterol regulatory element-binding protein 1), which is embedded in the endoplasmic reticulum membrane. Low sterol concentrations promote processing of this form, releasing the transcription factor form that translocates into the nucleus and activates transcription of genes involved in cholesterol biosynthesis and lipid homeostasis. Key transcription factor that regulates expression of genes involved in cholesterol biosynthesis and lipid homeostasis. Binds to the sterol regulatory element 1 (SRE-1) (5'-ATCACCCCAC-3'). Has dual sequence specificity binding to both an E-box motif (5'-ATCACGTGA-3') and to SRE-1 (5'-ATCACCCCAC-3'). Regulates the promoters of genes involved in cholesterol biosynthesis and the LDL receptor (LDLR) pathway of sterol regulation. The polypeptide is Sterol regulatory element-binding protein 1 (SREBF1) (Sus scrofa (Pig)).